The following is a 746-amino-acid chain: NAD(P)H-quinone oxidoreductase subunit 5, chloroplastic (746 aa).

Transmembrane regions (helical) follow at residues 9–29 (WIIPFIPLPVPILLGVGLLLF), 40–60 (WTFLSIFLLSIVMIFSLYLSI), 89–109 (IDPLTSIMSILITTVGILVLI), 125–145 (FAYMGFFNTSMLGLVTSSNLI), 147–167 (VYFFWELVGMCSYLLIGFWFT), 185–205 (GDFGLLLGILGLYWITGSFEF), 221–241 (VNLLFLTLCAFLLFVGPIAKS), 258–278 (TPISALIHAATMVAAGIFLVA), 280–300 (LLPLFIVIPSIMYIISLIGII), 327–347 (LGYMMLALGMGSYRSALFHLI), 354–374 (ALLFLGSGSIIHSMEAIVGYS), 396–416 (TAFLIGTLSLCGIPPLACFWS), 425–445 (LLFSPIFAIIACSTAGLTAFY), 547–567 (ILFPMLILLLFTLFIGAIGIP), 608–628 (FSVSIAFFGIFIAYCLYKPFY), and 723–743 (YLFLYLSYVLIFLMILLFFYF).

It belongs to the complex I subunit 5 family. In terms of assembly, NDH is composed of at least 16 different subunits, 5 of which are encoded in the nucleus.

The protein resides in the plastid. Its subcellular location is the chloroplast thylakoid membrane. The catalysed reaction is a plastoquinone + NADH + (n+1) H(+)(in) = a plastoquinol + NAD(+) + n H(+)(out). It catalyses the reaction a plastoquinone + NADPH + (n+1) H(+)(in) = a plastoquinol + NADP(+) + n H(+)(out). In terms of biological role, NDH shuttles electrons from NAD(P)H:plastoquinone, via FMN and iron-sulfur (Fe-S) centers, to quinones in the photosynthetic chain and possibly in a chloroplast respiratory chain. The immediate electron acceptor for the enzyme in this species is believed to be plastoquinone. Couples the redox reaction to proton translocation, and thus conserves the redox energy in a proton gradient. This chain is NAD(P)H-quinone oxidoreductase subunit 5, chloroplastic (ndhF), found in Olimarabidopsis pumila (Dwarf rocket).